The primary structure comprises 234 residues: 1-(5-phosphoribosyl)-5-[(5-phosphoribosylamino)methylideneamino] imidazole-4-carboxamide isomerase (234 aa).

The active-site Proton acceptor is the Asp-9. Catalysis depends on Asp-131, which acts as the Proton donor.

The protein belongs to the HisA/HisF family.

It is found in the cytoplasm. It carries out the reaction 1-(5-phospho-beta-D-ribosyl)-5-[(5-phospho-beta-D-ribosylamino)methylideneamino]imidazole-4-carboxamide = 5-[(5-phospho-1-deoxy-D-ribulos-1-ylimino)methylamino]-1-(5-phospho-beta-D-ribosyl)imidazole-4-carboxamide. It participates in amino-acid biosynthesis; L-histidine biosynthesis; L-histidine from 5-phospho-alpha-D-ribose 1-diphosphate: step 4/9. This Staphylococcus carnosus (strain TM300) protein is 1-(5-phosphoribosyl)-5-[(5-phosphoribosylamino)methylideneamino] imidazole-4-carboxamide isomerase.